The chain runs to 173 residues: MEEPQRARSQTVTTTASSFAENFSTTSSSFSYDREFLRTLPGLLIVAEIVLGLLVWTLIAGTEYFRVPAFGWVMFVAVFYWVLTVFFLIIYLTMTYTRIPQVPWTTVGLWFNGSAFALYLSAAIVDASSVSPERDSHNFNSWAASSFFAFLVTICYAGNTYFSFIAWRSRTIQ.

An MARVEL domain is found at Phe36–Arg168. Transmembrane regions (helical) follow at residues Leu40–Ala60, Phe70–Ile90, Thr105–Val125, and Phe147–Trp167.

It belongs to the chemokine-like factor family.

It localises to the membrane. The protein is CKLF-like MARVEL transmembrane domain-containing protein 8 (CMTM8) of Bos taurus (Bovine).